A 373-amino-acid polypeptide reads, in one-letter code: GTPase Obg (373 aa).

The region spanning 1–159 is the Obg domain; that stretch reads MKFIDEARIE…RMVRLELKVL (159 aa). A disordered region spans residues 128-147; sequence LHFKSSTNRAPRQKTDGKPG. One can recognise an OBG-type G domain in the interval 160-334; that stretch reads ADVGLLGMPN…LCYAVFDHIS (175 aa). Residues 166–173, 191–195, 213–216, 284–287, and 315–317 contribute to the GTP site; these read GMPNAGKS, FTTLA, DIPG, NKLD, and SAL. The Mg(2+) site is built by serine 173 and threonine 193. A disordered region spans residues 354–373; that stretch reads FREKPQAPAAADDAGTDPQV. Over residues 359 to 373 the composition is skewed to low complexity; the sequence is QAPAAADDAGTDPQV.

Belongs to the TRAFAC class OBG-HflX-like GTPase superfamily. OBG GTPase family. In terms of assembly, monomer. It depends on Mg(2+) as a cofactor.

Its subcellular location is the cytoplasm. Its function is as follows. An essential GTPase which binds GTP, GDP and possibly (p)ppGpp with moderate affinity, with high nucleotide exchange rates and a fairly low GTP hydrolysis rate. Plays a role in control of the cell cycle, stress response, ribosome biogenesis and in those bacteria that undergo differentiation, in morphogenesis control. The sequence is that of GTPase Obg from Paraburkholderia phytofirmans (strain DSM 17436 / LMG 22146 / PsJN) (Burkholderia phytofirmans).